Reading from the N-terminus, the 398-residue chain is Acetate kinase 2 (398 aa).

Residue N7 coordinates Mg(2+). K14 is an ATP binding site. R91 contributes to the substrate binding site. The Proton donor/acceptor role is filled by D148. ATP contacts are provided by residues 208–212 (HLGNG), 283–285 (DFR), and 331–335 (GVGEN). Residue E384 participates in Mg(2+) binding.

The protein belongs to the acetokinase family. Homodimer. Mg(2+) is required as a cofactor. Requires Mn(2+) as cofactor.

The protein localises to the cytoplasm. The enzyme catalyses acetate + ATP = acetyl phosphate + ADP. Its pathway is metabolic intermediate biosynthesis; acetyl-CoA biosynthesis; acetyl-CoA from acetate: step 1/2. In terms of biological role, catalyzes the formation of acetyl phosphate from acetate and ATP. Can also catalyze the reverse reaction. The polypeptide is Acetate kinase 2 (Clostridium perfringens (strain 13 / Type A)).